A 1067-amino-acid polypeptide reads, in one-letter code: Probable importin-5 homolog (1067 aa).

HEAT repeat units follow at residues leucine 3 to histidine 34, serine 42 to isoleucine 75, phenylalanine 93 to proline 120, proline 125 to alanine 152, alanine 164 to isoleucine 197, valine 206 to tyrosine 243, asparagine 251 to phenylalanine 286, leucine 295 to serine 347, glycine 349 to serine 381, glutamate 385 to leucine 425, arginine 427 to isoleucine 466, proline 468 to isoleucine 508, glutamate 510 to valine 553, lysine 555 to leucine 596, glutamate 598 to leucine 658, histidine 661 to histidine 703, phenylalanine 718 to glycine 757, alanine 763 to phenylalanine 826, proline 832 to glycine 869, tyrosine 876 to asparagine 909, phenylalanine 917 to leucine 960, proline 969 to arginine 999, glutamine 1008 to arginine 1040, and serine 1041 to phenylalanine 1064.

This sequence belongs to the importin beta family. Importin beta-3 subfamily.

It localises to the cytoplasm. Its subcellular location is the nucleus. Functionally, functions in nuclear protein import as nuclear transport receptor. Serves as receptor for nuclear localization signals (NLS) in cargo substrates. This is Probable importin-5 homolog from Dictyostelium discoideum (Social amoeba).